Consider the following 210-residue polypeptide: Signal peptidase complex catalytic subunit SEC11 (210 aa).

The Cytoplasmic segment spans residues 1–21 (MLAGLSPHLSNLRRSLTQVLN). Residues 22–38 (FALVLSTAFMMWKGLSI) form a helical; Signal-anchor for type II membrane protein membrane-spanning segment. The Lumenal portion of the chain corresponds to 39 to 210 (YTNSSSPIVV…MGAMVILQRE (172 aa)). Asn41 is a glycosylation site (N-linked (GlcNAc...) asparagine). Residues Ser53, His92, and Asp152 each act as charge relay system in the active site. The segment at 196-207 (VLLGIMGAMVIL) is C-terminal short (CTS) helix.

This sequence belongs to the peptidase S26B family. As to quaternary structure, component of the signal peptidase complex (SPC) composed of a catalytic subunit SEC11 and three accessory subunits SPC1, SPC2 and SPC3. The complex induces a local thinning of the ER membrane which is used to measure the length of the signal peptide (SP) h-region of protein substrates. This ensures the selectivity of the complex towards h-regions shorter than 18-20 amino acids. SPC associates with the translocon complex.

Its subcellular location is the endoplasmic reticulum membrane. It carries out the reaction Cleavage of hydrophobic, N-terminal signal or leader sequences from secreted and periplasmic proteins.. Catalytic component of the signal peptidase complex (SPC) which catalyzes the cleavage of N-terminal signal sequences from nascent proteins as they are translocated into the lumen of the endoplasmic reticulum. Specifically cleaves N-terminal signal peptides that contain a hydrophobic alpha-helix (h-region) shorter than 18-20 amino acids. This chain is Signal peptidase complex catalytic subunit SEC11 (SEC11), found in Coccidioides posadasii (strain RMSCC 757 / Silveira) (Valley fever fungus).